The chain runs to 514 residues: 2,3-bisphosphoglycerate-independent phosphoglycerate mutase (514 aa).

The Mn(2+) site is built by D14 and S64. The Phosphoserine intermediate role is filled by S64. Residues H125, 155–156 (RD), R187, R193, 263–266 (RADR), and K336 each bind substrate. The Mn(2+) site is built by D403, H407, D444, H445, and H463.

This sequence belongs to the BPG-independent phosphoglycerate mutase family. Monomer. Mn(2+) is required as a cofactor.

It catalyses the reaction (2R)-2-phosphoglycerate = (2R)-3-phosphoglycerate. The protein operates within carbohydrate degradation; glycolysis; pyruvate from D-glyceraldehyde 3-phosphate: step 3/5. In terms of biological role, catalyzes the interconversion of 2-phosphoglycerate and 3-phosphoglycerate. This chain is 2,3-bisphosphoglycerate-independent phosphoglycerate mutase, found in Escherichia coli (strain ATCC 8739 / DSM 1576 / NBRC 3972 / NCIMB 8545 / WDCM 00012 / Crooks).